A 162-amino-acid polypeptide reads, in one-letter code: NADH-quinone oxidoreductase subunit I (162 aa).

4Fe-4S ferredoxin-type domains are found at residues Arg-54–Thr-83 and Ser-93–Ile-122. The [4Fe-4S] cluster site is built by Cys-63, Cys-66, Cys-69, Cys-73, Cys-102, Cys-105, Cys-108, and Cys-112.

This sequence belongs to the complex I 23 kDa subunit family. As to quaternary structure, NDH-1 is composed of 14 different subunits. Subunits NuoA, H, J, K, L, M, N constitute the membrane sector of the complex. The cofactor is [4Fe-4S] cluster.

It localises to the cell inner membrane. It catalyses the reaction a quinone + NADH + 5 H(+)(in) = a quinol + NAD(+) + 4 H(+)(out). Its function is as follows. NDH-1 shuttles electrons from NADH, via FMN and iron-sulfur (Fe-S) centers, to quinones in the respiratory chain. The immediate electron acceptor for the enzyme in this species is believed to be ubiquinone. Couples the redox reaction to proton translocation (for every two electrons transferred, four hydrogen ions are translocated across the cytoplasmic membrane), and thus conserves the redox energy in a proton gradient. The protein is NADH-quinone oxidoreductase subunit I of Francisella tularensis subsp. tularensis (strain FSC 198).